A 1762-amino-acid polypeptide reads, in one-letter code: ADAMTS-like protein 1 (1762 aa).

The first 28 residues, 1 to 28 (MECCRRATPGTLLLFLAFLLLSSRTARS), serve as a signal peptide directing secretion. Residues 33-82 (DGLWDAWGPWSECSRTCGGGASYSLRRCLSSKSCEGRNIRYRTCSNVDCP) enclose the TSP type-1 1 domain. 2 C-linked (Man) tryptophan glycosylation sites follow: Trp-39 and Trp-42. 3 disulfides stabilise this stretch: Cys-45–Cys-76, Cys-49–Cys-81, and Cys-60–Cys-66. Residue Thr-48 is glycosylated (O-linked (Fuc...) threonine). Asn-251 carries an N-linked (GlcNAc...) asparagine glycan. Thr-312 carries an O-linked (Fuc...) threonine glycan. TSP type-1 domains lie at 376–424 (PLPR…MYTP), 436–493 (DCPK…TPCY), 522–584 (EEPS…GPCS), 607–665 (ELYD…NLDP), 666–729 (CPAR…FNCP), and 788–850 (CPSE…ATCA). Ser-391 carries an O-linked (Fuc...) serine glycan. The O-linked (Fuc...) threonine glycan is linked to Thr-451. Intrachain disulfides connect Cys-534/Cys-578, Cys-538/Cys-583, and Cys-549/Cys-567. 7 disulfide bridges follow: Cys-678–Cys-723, Cys-682–Cys-728, Cys-693–Cys-712, Cys-800–Cys-844, Cys-804–Cys-849, Cys-815–Cys-832, and Cys-899–Cys-947. Residues 861–963 (PHIAAARKVY…EHFVIKLIGG (103 aa)) enclose the Ig-like C2-type 1 domain. Residues 1120–1164 (LKPSERRTSPVTLSPHKHVSGFSSSLRTSSTGDAGGGSRRPHRKP) form a disordered region. Low complexity predominate over residues 1139-1151 (SGFSSSLRTSSTG). 3 consecutive Ig-like C2-type domains span residues 1164–1266 (PTIL…IAVT), 1286–1369 (PAVT…TQLL), and 1395–1485 (PSVL…ASLV). Cystine bridges form between Cys-1202-Cys-1250, Cys-1308-Cys-1353, and Cys-1418-Cys-1469. TSP type-1 domains follow at residues 1545–1608 (CPSR…QLCV) and 1666–1726 (CSVH…TPCE). Positions 1726-1762 (ENMECRDTTRYCEKVKQLKLCQLSQFKSRCCGTCGKA) constitute a PLAC domain.

Monomer. C-, N- and O-glycosylated. O-fucosylated by POFUT2 on a serine or a threonine residue found within the consensus sequence C1-X(2)-(S/T)-C2-G of the TSP type-1 repeat domains where C1 and C2 are the first and second cysteine residue of the repeat, respectively. Fucosylated repeats can then be further glycosylated by the addition of a beta-1,3-glucose residue by the glucosyltransferase, B3GALTL. Fucosylation mediates the efficient secretion of ADAMTSL1. Can also be C-glycosylated with one or two mannose molecules on tryptophan residues within the consensus sequence W-X-X-W of the TPRs, and N-glycosylated. These other glycosylations can also facilitate secretion. In terms of processing, disulfide bonds are present. As to expression, expressed primarily in adult skeletal muscle.

It is found in the secreted. The protein localises to the extracellular space. Its subcellular location is the extracellular matrix. In Homo sapiens (Human), this protein is ADAMTS-like protein 1 (ADAMTSL1).